The chain runs to 253 residues: Hydroxyacylglutathione hydrolase (253 aa).

Residues H54, H56, D58, H59, H110, D127, and H165 each contribute to the Zn(2+) site.

This sequence belongs to the metallo-beta-lactamase superfamily. Glyoxalase II family. In terms of assembly, monomer. Requires Zn(2+) as cofactor.

It carries out the reaction an S-(2-hydroxyacyl)glutathione + H2O = a 2-hydroxy carboxylate + glutathione + H(+). The protein operates within secondary metabolite metabolism; methylglyoxal degradation; (R)-lactate from methylglyoxal: step 2/2. Its function is as follows. Thiolesterase that catalyzes the hydrolysis of S-D-lactoyl-glutathione to form glutathione and D-lactic acid. In Idiomarina loihiensis (strain ATCC BAA-735 / DSM 15497 / L2-TR), this protein is Hydroxyacylglutathione hydrolase.